Here is a 207-residue protein sequence, read N- to C-terminus: Vexin (207 aa).

The tract at residues 65 to 104 (RDTGDRRWLQTGRLQTARPPGAHPTKTPSRPVGISEPKTS) is disordered.

This sequence belongs to the vexin family.

The protein resides in the cell membrane. It is found in the nucleus. Functionally, required for neurogenesis in the neural plate and retina. Strongly cooperates with neural bHLH factors to promote neurogenesis. In Mus musculus (Mouse), this protein is Vexin.